A 371-amino-acid polypeptide reads, in one-letter code: Cytochrome b (371 aa).

Helical transmembrane passes span 25–45 (FGSMLLTCSMIQVLTGFFLAV), 69–90 (WMVQNLHAIGASMFFICIYIHI), 105–125 (WLSGTTLLIMLMATAFFGYVL), and 170–190 (FFALHFILPFGIISLSSLHVL). Positions 75 and 89 each coordinate heme b. Residues His-174 and His-188 each contribute to the heme b site. Position 193 (His-193) interacts with a ubiquinone. 4 helical membrane passes run 218–238 (MKDLLMLTTTLTLLLMTISFF), 280–300 (LGGALALAMSIMILFTVPFIH), 312–332 (LMQLMFWTFTSTFVLITWAAT), and 339–358 (FISISQVASIIYFTFFISNP).

This sequence belongs to the cytochrome b family. As to quaternary structure, the cytochrome bc1 complex contains 3 respiratory subunits (MT-CYB, CYC1 and UQCRFS1), 2 core proteins (UQCRC1 and UQCRC2) and probably 6 low-molecular weight proteins. The cofactor is heme b.

The protein resides in the mitochondrion inner membrane. In terms of biological role, component of the ubiquinol-cytochrome c reductase complex (complex III or cytochrome b-c1 complex) that is part of the mitochondrial respiratory chain. The b-c1 complex mediates electron transfer from ubiquinol to cytochrome c. Contributes to the generation of a proton gradient across the mitochondrial membrane that is then used for ATP synthesis. The polypeptide is Cytochrome b (MT-CYB) (Boa constrictor (Boa)).